The following is a 218-amino-acid chain: 3,4-dihydroxy-2-butanone 4-phosphate synthase (218 aa).

Residues 37–38 (RE), aspartate 42, 150–154 (RGGHT), and glutamate 174 contribute to the D-ribulose 5-phosphate site. Glutamate 38 provides a ligand contact to Mg(2+). A Mg(2+)-binding site is contributed by histidine 153.

It belongs to the DHBP synthase family. As to quaternary structure, homodimer. The cofactor is Mg(2+). It depends on Mn(2+) as a cofactor.

The catalysed reaction is D-ribulose 5-phosphate = (2S)-2-hydroxy-3-oxobutyl phosphate + formate + H(+). It participates in cofactor biosynthesis; riboflavin biosynthesis; 2-hydroxy-3-oxobutyl phosphate from D-ribulose 5-phosphate: step 1/1. Its function is as follows. Catalyzes the conversion of D-ribulose 5-phosphate to formate and 3,4-dihydroxy-2-butanone 4-phosphate. This chain is 3,4-dihydroxy-2-butanone 4-phosphate synthase, found in Erwinia tasmaniensis (strain DSM 17950 / CFBP 7177 / CIP 109463 / NCPPB 4357 / Et1/99).